Here is a 170-residue protein sequence, read N- to C-terminus: Small ribosomal subunit protein eS7 (170 aa).

This sequence belongs to the eukaryotic ribosomal protein eS7 family. In terms of assembly, component of the small ribosomal subunit.

The protein localises to the cytoplasm. The sequence is that of Small ribosomal subunit protein eS7 (RPS7) from Encephalitozoon cuniculi (strain GB-M1) (Microsporidian parasite).